The chain runs to 200 residues: Protein Mbur_1344 (200 aa).

The AMMECR1 domain occupies 5–192 (SEGEQTVRLA…EVEPRGDIEE (188 aa)).

This Methanococcoides burtonii (strain DSM 6242 / NBRC 107633 / OCM 468 / ACE-M) protein is Protein Mbur_1344.